Reading from the N-terminus, the 439-residue chain is ATP-dependent RNA helicase RhlB (439 aa).

Positions 9-37 match the Q motif motif; that stretch reads QKFADLPLCDEVKQALNENGFEHCTPIQA. The Helicase ATP-binding domain occupies 40 to 219; it reads LPVLLEKKDI…YDHMNDPVKV (180 aa). 53-60 is an ATP binding site; the sequence is AQTGTGKT. The DEAD box motif lies at 165-168; it reads DEAD. In terms of domain architecture, Helicase C-terminal spans 243 to 390; sequence KLKLLHSLIE…VTSYDRDALI (148 aa). Positions 394–439 are disordered; sequence PPVKIHRKPHAGGRNLRDRNGSPRPSGSHRSGSGRPPRHDRTRRHS. Low complexity predominate over residues 415–428; it reads SPRPSGSHRSGSGR. Basic residues predominate over residues 429–439; that stretch reads PPRHDRTRRHS.

It belongs to the DEAD box helicase family. RhlB subfamily. In terms of assembly, component of the RNA degradosome, which is a multiprotein complex involved in RNA processing and mRNA degradation.

The protein resides in the cytoplasm. It carries out the reaction ATP + H2O = ADP + phosphate + H(+). In terms of biological role, DEAD-box RNA helicase involved in RNA degradation. Has RNA-dependent ATPase activity and unwinds double-stranded RNA. The protein is ATP-dependent RNA helicase RhlB of Shewanella amazonensis (strain ATCC BAA-1098 / SB2B).